We begin with the raw amino-acid sequence, 178 residues long: Outer envelope pore protein 16-2, chloroplastic (178 aa).

Residues 1–102 (MEKSGGRIVM…DALVKNTGKE (102 aa)) are contains beta strands. Residues 103 to 119 (SLQWGLAAGLYSGITYG) traverse the membrane as a helical segment.

It belongs to the Tim17/Tim22/Tim23 family. Plastid outer envelope porin OEP16 (TC 1.B.30) subfamily. As to quaternary structure, homodimer and oligomers in membrane. In terms of tissue distribution, detected in pollen and seeds. Present in leaves and cotyledons.

Its subcellular location is the plastid. The protein resides in the chloroplast outer membrane. Voltage-dependent high-conductance channel with a slight cation-selectivity; selective for amino acids but excludes triosephosphates or uncharged sugars. Non-essential amino acid-selective channel protein and translocation pore for NADPH:protochlorophyllide oxidoreductase A (PORA) and possibly PORB. The sequence is that of Outer envelope pore protein 16-2, chloroplastic (OEP162) from Arabidopsis thaliana (Mouse-ear cress).